The following is a 478-amino-acid chain: ATP synthase subunit beta (478 aa).

ATP is bound at residue 160–167; sequence GGAGVGKT.

This sequence belongs to the ATPase alpha/beta chains family. F-type ATPases have 2 components, CF(1) - the catalytic core - and CF(0) - the membrane proton channel. CF(1) has five subunits: alpha(3), beta(3), gamma(1), delta(1), epsilon(1). CF(0) has three main subunits: a(1), b(2) and c(9-12). The alpha and beta chains form an alternating ring which encloses part of the gamma chain. CF(1) is attached to CF(0) by a central stalk formed by the gamma and epsilon chains, while a peripheral stalk is formed by the delta and b chains.

The protein localises to the cell inner membrane. The catalysed reaction is ATP + H2O + 4 H(+)(in) = ADP + phosphate + 5 H(+)(out). Produces ATP from ADP in the presence of a proton gradient across the membrane. The catalytic sites are hosted primarily by the beta subunits. The sequence is that of ATP synthase subunit beta from Orientia tsutsugamushi (strain Ikeda) (Rickettsia tsutsugamushi).